Consider the following 344-residue polypeptide: Fructose-bisphosphate aldolase (344 aa).

Serine 53 lines the D-glyceraldehyde 3-phosphate pocket. The active-site Proton donor is aspartate 95. The Zn(2+) site is built by histidine 96, aspartate 131, glutamate 161, and histidine 212. Glycine 213 is a dihydroxyacetone phosphate binding site. Residue histidine 252 participates in Zn(2+) binding. Dihydroxyacetone phosphate is bound by residues 253 to 255 (GGS) and 274 to 277 (NVDT).

This sequence belongs to the class II fructose-bisphosphate aldolase family. Zn(2+) serves as cofactor.

The enzyme catalyses beta-D-fructose 1,6-bisphosphate = D-glyceraldehyde 3-phosphate + dihydroxyacetone phosphate. It functions in the pathway carbohydrate degradation; glycolysis; D-glyceraldehyde 3-phosphate and glycerone phosphate from D-glucose: step 4/4. Catalyzes the aldol condensation of dihydroxyacetone phosphate (DHAP or glycerone-phosphate) with glyceraldehyde 3-phosphate (G3P) to form fructose 1,6-bisphosphate (FBP) in gluconeogenesis and the reverse reaction in glycolysis. The sequence is that of Fructose-bisphosphate aldolase (fba) from Corynebacterium glutamicum (strain ATCC 13032 / DSM 20300 / JCM 1318 / BCRC 11384 / CCUG 27702 / LMG 3730 / NBRC 12168 / NCIMB 10025 / NRRL B-2784 / 534).